A 215-amino-acid chain; its full sequence is Putative glycosyltransferase ALG1L2 (215 aa).

The tract at residues 40–66 (PFRARSEPEDPDTERSAFTERDSGSGL) is disordered. The span at 43–62 (ARSEPEDPDTERSAFTERDS) shows a compositional bias: basic and acidic residues.

This sequence belongs to the glycosyltransferase group 1 family.

In terms of biological role, putative glycosyltransferase. In Homo sapiens (Human), this protein is Putative glycosyltransferase ALG1L2 (ALG1L2).